A 338-amino-acid chain; its full sequence is Glyceraldehyde-3-phosphate dehydrogenase (338 aa).

NAD(+)-binding positions include 12-13 (RI), Asp34, and Arg79. D-glyceraldehyde 3-phosphate-binding positions include 150 to 152 (SCT), Thr181, 210 to 211 (TG), and Arg233. Cys151 functions as the Nucleophile in the catalytic mechanism. Asn315 contacts NAD(+).

This sequence belongs to the glyceraldehyde-3-phosphate dehydrogenase family. Homotetramer.

It is found in the cytoplasm. The enzyme catalyses D-glyceraldehyde 3-phosphate + phosphate + NAD(+) = (2R)-3-phospho-glyceroyl phosphate + NADH + H(+). Its pathway is carbohydrate degradation; glycolysis; pyruvate from D-glyceraldehyde 3-phosphate: step 1/5. The chain is Glyceraldehyde-3-phosphate dehydrogenase (GPD) from Sordaria macrospora.